The following is a 1374-amino-acid chain: Probable multidrug resistance-associated protein lethal(2)03659 (1374 aa).

Residues 1–40 (MDKQPVLEPTFDSVSERENTSIEESSLLENNGFDHRNKDE) form a disordered region. The next 6 helical transmembrane spans lie at 159–179 (LLRV…VVEL), 205–225 (AGFY…MILT), 282–302 (YTVH…YLMY), 305–325 (IGIS…IQMY), 404–424 (IFLS…EIAF), and 426–446 (ITAY…SAII). One can recognise an ABC transmembrane type-1 1 domain in the interval 168 to 449 (GFPGLAIFVV…YVPSAIIQTA (282 aa)). The tract at residues 466 to 492 (ELGSSDKSEGPSKDTVPGNPPSNNNEA) is disordered. Residues 499 to 722 (ISIRDLKAKW…GLITGLGSLS (224 aa)) enclose the ABC transporter 1 domain. 534–541 (GLTGSGKS) is an ATP binding site. Residue Asn-561 is glycosylated (N-linked (GlcNAc...) asparagine). The segment at 723–766 (KTDKAKTEEQEPLNLNSPDNKNEVTPIKENSEQTVGGSSSGKEH) is disordered. 5 helical membrane-spanning segments follow: residues 787–807 (GGGL…QVAV), 845–865 (LIII…FNIA), 913–933 (VVLV…IVIA), 938–958 (LLLV…NLYL), and 1025–1045 (YCMN…FFAF). An ABC transmembrane type-1 2 domain is found at 793 to 1079 (FLVMLSSSVL…GVRQTAELEN (287 aa)). The ABC transporter 2 domain occupies 1119 to 1352 (FKELNLRYTP…SDSKVFHNLV (234 aa)). 1153–1160 (GRTGAGKS) is a binding site for ATP. Residues Asn-1254 and Asn-1353 are each glycosylated (N-linked (GlcNAc...) asparagine).

This sequence belongs to the ABC transporter superfamily. ABCC family. Conjugate transporter (TC 3.A.1.208) subfamily. Uniform expression in embryos.

It is found in the membrane. Vital for development. This Drosophila melanogaster (Fruit fly) protein is Probable multidrug resistance-associated protein lethal(2)03659 (l(2)03659).